We begin with the raw amino-acid sequence, 304 residues long: Light-independent protochlorophyllide reductase iron-sulfur ATP-binding protein (304 aa).

ATP-binding positions include 46–51 (GIGKST) and lysine 75. Residue serine 50 coordinates Mg(2+). [4Fe-4S] cluster contacts are provided by cysteine 131 and cysteine 165. ATP is bound by residues 216–217 (NR) and 240–242 (PDL).

Belongs to the NifH/BchL/ChlL family. In terms of assembly, homodimer. Protochlorophyllide reductase is composed of three subunits; BchL, BchN and BchB. [4Fe-4S] cluster is required as a cofactor.

It carries out the reaction chlorophyllide a + oxidized 2[4Fe-4S]-[ferredoxin] + 2 ADP + 2 phosphate = protochlorophyllide a + reduced 2[4Fe-4S]-[ferredoxin] + 2 ATP + 2 H2O. The protein operates within porphyrin-containing compound metabolism; bacteriochlorophyll biosynthesis (light-independent). In terms of biological role, component of the dark-operative protochlorophyllide reductase (DPOR) that uses Mg-ATP and reduced ferredoxin to reduce ring D of protochlorophyllide (Pchlide) to form chlorophyllide a (Chlide). This reaction is light-independent. The L component serves as a unique electron donor to the NB-component of the complex, and binds Mg-ATP. The protein is Light-independent protochlorophyllide reductase iron-sulfur ATP-binding protein of Rhodobacter capsulatus (strain ATCC BAA-309 / NBRC 16581 / SB1003).